The following is a 198-amino-acid chain: Glycerol-3-phosphate acyltransferase 1 (198 aa).

5 consecutive transmembrane segments (helical) span residues 5–25, 52–72, 81–101, 111–131, and 138–158; these read ALLALLLSYLIGAIPAAAWLA, GPALLVASFDILKGVLAVLLA, WAALCGVLAVIGHNFSPFLAF, FGVIAILDPVLGLTTFVLAIA, and FVSAGSIMGAFIAGALVLVLP.

This sequence belongs to the PlsY family. As to quaternary structure, probably interacts with PlsX.

The protein localises to the cell membrane. The enzyme catalyses an acyl phosphate + sn-glycerol 3-phosphate = a 1-acyl-sn-glycero-3-phosphate + phosphate. It participates in lipid metabolism; phospholipid metabolism. Catalyzes the transfer of an acyl group from acyl-phosphate (acyl-PO(4)) to glycerol-3-phosphate (G3P) to form lysophosphatidic acid (LPA). This enzyme utilizes acyl-phosphate as fatty acyl donor, but not acyl-CoA or acyl-ACP. This is Glycerol-3-phosphate acyltransferase 1 from Deinococcus radiodurans (strain ATCC 13939 / DSM 20539 / JCM 16871 / CCUG 27074 / LMG 4051 / NBRC 15346 / NCIMB 9279 / VKM B-1422 / R1).